Reading from the N-terminus, the 460-residue chain is 3'3'-cGAMP-specific phosphodiesterase 3 (460 aa).

Positions 28-189 constitute an HD domain; sequence PPEHCIRCCW…IPLFSRIALL (162 aa). An HD-GYP domain is found at 260–455; sequence DDAYLECIVT…LPDEYTQLPH (196 aa). Residues His317 and Asp318 each coordinate a divalent metal cation. The active-site Proton donor is Lys321. Residues His346, His370, His371, and Asp399 each contribute to the a divalent metal cation site.

In terms of assembly, monomer. It depends on Mn(2+) as a cofactor.

It carries out the reaction 3',3'-cGAMP + H2O = 5'-pApG-3' + H(+). Its function is as follows. Phosphodiesterase (PDE) that catalyzes the hydrolysis of 3'3'-cyclic GMP-AMP (3'3'-cGAMP), leading to linear 5'-pApG. Counteracts the function of the 3'3'-cGAMP synthase DncV, and is involved in the modulation of intracellular 3'3'-cGAMP levels. Enhances bacterial chemotaxis and inhibits intestinal colonization in vivo. Thus exerts a crucial role in regulating bacterial infectivity through catalyzing 3'3'-cGAMP degradation. Is specific for 3'3'-cGAMP since it cannot degrade other cGAMP linkage isomers (3'2'-, 2'3'-, and 2'2'-cGAMPs); is also able to hydrolyze c-di-GMP but not c-di-AMP. This Vibrio cholerae serotype O1 (strain ATCC 39315 / El Tor Inaba N16961) protein is 3'3'-cGAMP-specific phosphodiesterase 3.